A 285-amino-acid chain; its full sequence is MANLRIIKRRIRSVRNIAKITRAMEMIAASKMKKAQERGLAGRPYSEKITEVIAALAALPQSGEILHPLLERRPVKKIAILHITPDRGQCGGLVANINRKTGTFIMEQKVSVSAVVVGRKGVDFIRRIRQQMRAEFINLGDKPDYLDTLPISRVIMDDFMSGEIDQVFIAYTQFVSTAIQNPVLEQLLPVVPVEFPPGQNLEYIYEPESAAVLNSLLPRFVEMSVYHAILESIASEQSARMVAMRNATDNAKELIGELTLVYNKARQESITNELLDIVGGAAALA.

The protein belongs to the ATPase gamma chain family. F-type ATPases have 2 components, CF(1) - the catalytic core - and CF(0) - the membrane proton channel. CF(1) has five subunits: alpha(3), beta(3), gamma(1), delta(1), epsilon(1). CF(0) has three main subunits: a, b and c.

It is found in the cell membrane. Functionally, produces ATP from ADP in the presence of a proton gradient across the membrane. The gamma chain is believed to be important in regulating ATPase activity and the flow of protons through the CF(0) complex. The polypeptide is ATP synthase gamma chain (Dehalococcoides mccartyi (strain ATCC BAA-2100 / JCM 16839 / KCTC 5957 / BAV1)).